The following is a 597-amino-acid chain: Centrosomal protein of 70 kDa (597 aa).

A disordered region spans residues 1 to 24; it reads MFPVAPKPQDSNQPSDRLMTEKQQ. Coiled-coil stretches lie at residues 66–179 and 254–320; these read MRQN…QTEV and TYKG…QELI. One copy of the TPR repeat lies at 483 to 516; it reads NGVYPRMNEVYTRLGEMNNAVRNLQELLELDSSS.

As to quaternary structure, directly interacts with tubulin-gamma; this interaction determines centrosomal localization.

Its subcellular location is the cytoplasm. The protein resides in the cytoskeleton. It localises to the microtubule organizing center. It is found in the centrosome. Its function is as follows. Plays a role in the organization of both preexisting and nascent microtubules in interphase cells. During mitosis, required for the organization and orientation of the mitotic spindle. The protein is Centrosomal protein of 70 kDa (CEP70) of Macaca fascicularis (Crab-eating macaque).